Here is a 640-residue protein sequence, read N- to C-terminus: 1,4-alpha-glucan branching enzyme GlgB (640 aa).

The active-site Nucleophile is D318. E371 (proton donor) is an active-site residue.

It belongs to the glycosyl hydrolase 13 family. GlgB subfamily. As to quaternary structure, monomer.

The enzyme catalyses Transfers a segment of a (1-&gt;4)-alpha-D-glucan chain to a primary hydroxy group in a similar glucan chain.. It participates in glycan biosynthesis; glycogen biosynthesis. Catalyzes the formation of the alpha-1,6-glucosidic linkages in glycogen by scission of a 1,4-alpha-linked oligosaccharide from growing alpha-1,4-glucan chains and the subsequent attachment of the oligosaccharide to the alpha-1,6 position. This is 1,4-alpha-glucan branching enzyme GlgB from Francisella philomiragia subsp. philomiragia (strain ATCC 25017 / CCUG 19701 / FSC 153 / O#319-036).